Here is a 270-residue protein sequence, read N- to C-terminus: Putative [LysW]-aminoadipate/[LysW]-glutamate kinase (270 aa).

Substrate contacts are provided by residues 42-43 (GG), Arg-69, and Asn-177.

The protein belongs to the acetylglutamate kinase family. LysZ subfamily.

It is found in the cytoplasm. It carries out the reaction [amino-group carrier protein]-C-terminal-N-(1,4-dicarboxybutan-1-yl)-L-glutamine + ATP = [amino-group carrier protein]-C-terminal-N-(1-carboxy-5-phosphooxy-5-oxopentan-1-yl)-L-glutamine + ADP. The catalysed reaction is [amino-group carrier protein]-C-terminal-gamma-(L-glutamyl)-L-glutamate + ATP = [amino-group carrier protein]-C-terminal-gamma-(5-phospho-L-glutamyl)-L-glutamate + ADP. Its pathway is amino-acid biosynthesis; L-lysine biosynthesis via AAA pathway; L-lysine from L-alpha-aminoadipate (Thermus route): step 2/5. The protein operates within amino-acid biosynthesis; L-arginine biosynthesis. Involved in both the arginine and lysine biosynthetic pathways. Phosphorylates the LysW-bound precursors glutamate (for arginine biosynthesis), respectively alpha-aminoadipate (for lysine biosynthesis). This chain is Putative [LysW]-aminoadipate/[LysW]-glutamate kinase, found in Aeropyrum pernix (strain ATCC 700893 / DSM 11879 / JCM 9820 / NBRC 100138 / K1).